The following is a 227-amino-acid chain: Uridylate kinase (227 aa).

9–10 (GS) is an ATP binding site. Position 44 (Gly-44) interacts with UMP. Gly-45 and Arg-49 together coordinate ATP. UMP contacts are provided by residues Asp-66 and 114-120 (TVPGHTT). ATP contacts are provided by Thr-140, Phe-146, and Asp-149.

This sequence belongs to the UMP kinase family. As to quaternary structure, homohexamer.

The protein resides in the cytoplasm. The catalysed reaction is UMP + ATP = UDP + ADP. It functions in the pathway pyrimidine metabolism; CTP biosynthesis via de novo pathway; UDP from UMP (UMPK route): step 1/1. With respect to regulation, inhibited by UTP. Its function is as follows. Catalyzes the reversible phosphorylation of UMP to UDP. The protein is Uridylate kinase of Natronomonas pharaonis (strain ATCC 35678 / DSM 2160 / CIP 103997 / JCM 8858 / NBRC 14720 / NCIMB 2260 / Gabara) (Halobacterium pharaonis).